A 288-amino-acid polypeptide reads, in one-letter code: Rhox homeobox family member 2 (288 aa).

The segment at 16 to 136 (SPAVDDEKEL…GLEPGNAQQP (121 aa)) is disordered. Over residues 39–48 (VKEEEEDAQP) the composition is skewed to acidic residues. Residues 68–80 (GEEKDGGGEEKDG) are compositionally biased toward basic and acidic residues. A DNA-binding region (homeobox) is located at residues 134-193 (QQPNVHAFTPLQLQELERIFQREQFPSEFLRRRLARSMNVTELAVQIWFENRRAKWRRHQ). The Nuclear localization signal signature appears at 186-195 (RAKWRRHQRA).

Belongs to the paired-like homeobox family. PEPP subfamily. Testis. Not detected in epididymis nor placenta. In testis, mainly expressed in germ cells, but also detected in somatic cells such as Sertoli cells, Leydig cells and peritubular cells.

It is found in the nucleus. Its function is as follows. Transcription factor maybe involved in reproductive processes. Modulates expression of target genes encoding proteins involved in processes relevant to spermatogenesis. In Homo sapiens (Human), this protein is Rhox homeobox family member 2.